Reading from the N-terminus, the 231-residue chain is MKVVIVTSVASLLDASIQFQKTAYRHHCNYLSMQVVKEIEEFGTINEKNLEFDTWTDVIQNDEIDALVFYRVKQIGISTGVLYKSMMRNRTKPISMYFVRDCLAFDGDPPSFRMTSCNINAYNRNKIKDLIILMNMKTCNKKIIGEFIIDNFGSVDALLSIINSNVTWVTSVINNSNGRGINIRVSNNKMLTITSFRRFVNKLKMYKTTKCASQLDNVCTEMNKMDIIDKK.

It belongs to the orthopoxvirus OPG058 family.

It is found in the host nucleus. It localises to the host nucleolus. The protein is Protein OPG061 (OPG061) of Vaccinia virus (strain L-IVP) (VACV).